A 76-amino-acid polypeptide reads, in one-letter code: MATWIWILIALLCLVAGVALGFYIARRYMMNYLEQNPPINEDMIKTLMMQMGQKPSQKKVNQVMRSMSGSMKSPKK.

Residues 4–24 (WIWILIALLCLVAGVALGFYI) form a helical membrane-spanning segment. The segment at 54-76 (KPSQKKVNQVMRSMSGSMKSPKK) is disordered.

It belongs to the UPF0154 family.

Its subcellular location is the cell membrane. The chain is UPF0154 protein Exig_1099 from Exiguobacterium sibiricum (strain DSM 17290 / CCUG 55495 / CIP 109462 / JCM 13490 / 255-15).